Consider the following 953-residue polypeptide: MSQPDGAAAPQVDGASAPGRKSAVNRERLKRSQKSSKVEGPEPVPAEASLSAEQGTMTEVKVKTEVPDDYIQEVIWQGEAKEEKAGGKDSTGDVPAEICVVIGGVRNQQTLDGKAPEGSPHGGSVRSRYSGTWIFDQALKYASGSYECGICGKKYKYYNCFQTHVRAHRDTEATSGEGVSQSNNFRYTCDICGKKYKYYSCFQEHRDLHAVDVFSVEGAPENRADPFDQGVVATDEVKEEPPEPFQKIGPKTGNYTCEFCGKQYKYYTPYQEHVALHAPISTAPGWEPPEDPDTGSECSHPEVTPSPRFVAAKTQSNQSGKKAPASVVRCTSLLHRTPPATQTQTFRAPNSGSPASKAAAAENTFSRRVESKAQNHFEETNSSSQNSSEPYTCGACGIQFQFYSNLLEHMQSHAADNENNITSNQSRSPPAAVEEKWKPQAQRNSANNTTTSGLTPNSVIPEKERQNIAERLLRVMCADLGALSVVSGKEFLKLAQTLVDSGARYGAFSVTEILGNFNTLALKHLPRMYNQVKVKVTCALGSNACLGIGVTCHSQSVGPDSCYILTAYQAEGNHIKSYVLGVKGADIRDSGDLVHHWVQNVLSEFVMSEIRTVYVTDCRVSTSAFSKAGMCLRCSACALNSVVQSVLSKRTLQARSMHEVIELLNVCEDLAGSTGLAKETFGSLEETSPPPCWNSVTDSLLLVHERYEQICEFYSRAKKMNLIQSLNKHLLSNLAAILTPVKQAVIELSNESQPTLQLVLPTYVRLEKLFTAKANDAGTVSKLCHLFLEALKENFKVHPAHKVAMILDPQQKLRPVPPYQHEEIISKVCELINEVKESWAEEADFEPAAKKARSATGEHPAAQEEDRLGKNEVYDYLQEPLFQATPDLFQYWSCVTQKHTKLAKLAFWLLAVPAVGARSGCVNMCEQALLIKRRRLLSPEDMNKLMFLKSNML.

At Met1 the chain carries N-acetylmethionine. The interval 1–56 (MSQPDGAAAPQVDGASAPGRKSAVNRERLKRSQKSSKVEGPEPVPAEASLSAEQGT) is disordered. Glycyl lysine isopeptide (Lys-Gly) (interchain with G-Cter in SUMO2) cross-links involve residues Lys63 and Lys81. C2H2-type zinc fingers lie at residues 146–168 (YECGICGKKYKYYNCFQTHVRAH) and 187–209 (YTCDICGKKYKYYSCFQEHRDLH). Lys238 is covalently cross-linked (Glycyl lysine isopeptide (Lys-Gly) (interchain with G-Cter in SUMO2)). The segment at 255–277 (YTCEFCGKQYKYYTPYQEHVALH) adopts a C2H2-type 3 zinc-finger fold. Disordered regions lie at residues 283–305 (APGWEPPEDPDTGSECSHPEVTP) and 337–390 (TPPA…SSEP). A compositionally biased stretch (polar residues) spans 339 to 354 (PATQTQTFRAPNSGSP). Over residues 365–379 (FSRRVESKAQNHFEE) the composition is skewed to basic and acidic residues. The C2H2-type 4 zinc-finger motif lies at 391 to 413 (YTCGACGIQFQFYSNLLEHMQSH). Over residues 419–428 (NNITSNQSRS) the composition is skewed to polar residues. Residues 419–461 (NNITSNQSRSPPAAVEEKWKPQAQRNSANNTTTSGLTPNSVIP) form a disordered region. Lys436 participates in a covalent cross-link: Glycyl lysine isopeptide (Lys-Gly) (interchain with G-Cter in SUMO2). Positions 441 to 458 (AQRNSANNTTTSGLTPNS) are enriched in polar residues.

The protein belongs to the krueppel C2H2-type zinc-finger protein family. As to quaternary structure, interacts with UHRF2.

The protein localises to the nucleus. Its subcellular location is the chromosome. Regulates UHRF2 function as a specific 5-hydroxymethylcytosine (5hmC) reader by regulating its chromatin localization. The protein is Zinc finger protein 618 (Znf618) of Mus musculus (Mouse).